Here is a 458-residue protein sequence, read N- to C-terminus: MSLRIYNTLSRALEEFSPLEPGHVRMYVCGMTVYDLCHLGHARSMIAFDVVQRWLRASGLAVTYVRNITDIDDKIIKRAVENGETIRSLTDRMIDALHQDADALGIERPTHEPRATAYVPQMLDMIGTLQGKGLAYQAGNGDVNYAVRKFPGYGKLSGKSLDELNAGERVAVQDGKHDPLDFVLWKSAKPEEPADVKWRSPFGEGRPGWHIECSAMGCALLGESFDIHGGGADLQFPHHENEIAQSEGATGKPFARLWMHNGFINVDNEKMSKSLGNFFTIRDVLKEYDAETVRFFVVRSHYRSPLNYSNVHLDDARAALKRLYTALSLVAPAPVEVDWAEGYAARFKAAMDEDFGTPEAVAVLFDLAGEVNRSKSPAAAGLLKALGGHLGLLQADPQDFLKAGAGLDEAAIQAQIAARATAKAAKNFAEADRIRNDLLAQGIVLKDSASGTTWEAAQ.

Zn(2+) is bound at residue Cys-29. Residues Met-31–His-41 carry the 'HIGH' region motif. Zn(2+) is bound by residues Cys-213, His-238, and Glu-242. Residues Lys-270–Ser-274 carry the 'KMSKS' region motif. Lys-273 serves as a coordination point for ATP.

This sequence belongs to the class-I aminoacyl-tRNA synthetase family. As to quaternary structure, monomer. Zn(2+) is required as a cofactor.

Its subcellular location is the cytoplasm. It carries out the reaction tRNA(Cys) + L-cysteine + ATP = L-cysteinyl-tRNA(Cys) + AMP + diphosphate. The sequence is that of Cysteine--tRNA ligase from Acidovorax sp. (strain JS42).